Reading from the N-terminus, the 386-residue chain is Tetratricopeptide repeat protein 4 (386 aa).

Position 1 is an N-acetylmethionine (methionine 1). Serine 51 carries the post-translational modification Phosphoserine. 3 TPR repeats span residues 79 to 112 (AKTY…KCAD), 117 to 150 (AVLY…KPGH), and 151 to 184 (LKAI…DAKE). The residue at position 244 (serine 244) is a Phosphoserine.

This sequence belongs to the TTC4 family. Interacts (via TPR repeats) with HSP90AB1. Interacts with HSPA8, CDC6 and TBK1. Interacts with isoform 1 and isoform 3 of MSL1. As to expression, expressed at high levels in the heart, testis, kidney, brain and tongue. Expressed at low levels in the stomach, lung and liver.

Its subcellular location is the nucleus. It localises to the nucleoplasm. The protein resides in the cytoplasm. Functionally, may act as a co-chaperone for HSP90AB1. This Mus musculus (Mouse) protein is Tetratricopeptide repeat protein 4 (Ttc4).